The primary structure comprises 249 residues: ATP-dependent dethiobiotin synthetase BioD (249 aa).

11–16 contributes to the ATP binding site; sequence NVGKTI. Threonine 15 serves as a coordination point for Mg(2+). Residue lysine 31 is part of the active site. Threonine 35 contributes to the substrate binding site. Residues aspartate 40, 127 to 130, 188 to 189, and 215 to 217 contribute to the ATP site; these read EGAG, NS, and PYL. Residues aspartate 40 and glutamate 127 each coordinate Mg(2+).

It belongs to the dethiobiotin synthetase family. In terms of assembly, homodimer. Mg(2+) serves as cofactor.

The protein resides in the cytoplasm. It catalyses the reaction (7R,8S)-7,8-diammoniononanoate + CO2 + ATP = (4R,5S)-dethiobiotin + ADP + phosphate + 3 H(+). It functions in the pathway cofactor biosynthesis; biotin biosynthesis; biotin from 7,8-diaminononanoate: step 1/2. Catalyzes a mechanistically unusual reaction, the ATP-dependent insertion of CO2 between the N7 and N8 nitrogen atoms of 7,8-diaminopelargonic acid (DAPA, also called 7,8-diammoniononanoate) to form a ureido ring. This is ATP-dependent dethiobiotin synthetase BioD from Neorickettsia sennetsu (strain ATCC VR-367 / Miyayama) (Ehrlichia sennetsu).